Consider the following 183-residue polypeptide: MSRIGKLPISIPAGVTVSHKDEIVTVKGPKGELSQYVDPRITVVIEGGMIHLERKTDDRIERSLHGLYRSLINNMVQGVSAGFKRELELVGVGYRASNQGQLLELSLGFTHSIFMQLPKEVTVETKSERNKNPLIILESADKQLLGQVCMKIRSFRKPEPYKGKGVKFVGEQIRRKSGKSAGK.

Belongs to the universal ribosomal protein uL6 family. In terms of assembly, part of the 50S ribosomal subunit.

This protein binds to the 23S rRNA, and is important in its secondary structure. It is located near the subunit interface in the base of the L7/L12 stalk, and near the tRNA binding site of the peptidyltransferase center. In Porphyromonas gingivalis (strain ATCC 33277 / DSM 20709 / CIP 103683 / JCM 12257 / NCTC 11834 / 2561), this protein is Large ribosomal subunit protein uL6.